The following is a 305-amino-acid chain: Glutaminase 2 (305 aa).

Substrate is bound by residues Ser-61, Asn-113, Glu-158, Asn-165, Tyr-189, Tyr-241, and Val-259.

The protein belongs to the glutaminase family. In terms of assembly, homotetramer.

The catalysed reaction is L-glutamine + H2O = L-glutamate + NH4(+). The protein is Glutaminase 2 of Clostridium perfringens (strain 13 / Type A).